A 361-amino-acid polypeptide reads, in one-letter code: Phospho-N-acetylmuramoyl-pentapeptide-transferase (361 aa).

10 consecutive transmembrane segments (helical) span residues 28–48 (LAIIITLSLSFITGPILIKFL), 74–94 (TMGGIMIILSSCLSTLLLADL), 99–119 (IWITLFGFISFGIIGFMDDYA), 133–153 (SKLLLQGIISLIICILLEYLD), 168–188 (LSLDLGYFYIVFAIFVIVGSS), 203–223 (VPIAFTAGSFALISYLVGNLI), 236–256 (TGELTVLCAGLVGSCLGFLWF), 263–283 (VFMGDTGSLSLGGVLGIISVI), 288–308 (IVLAIVGGLFVIETASVILQV), and 338–358 (KVVIRFWIISVIFALIGLSSL).

It belongs to the glycosyltransferase 4 family. MraY subfamily. It depends on Mg(2+) as a cofactor.

It localises to the cell inner membrane. The catalysed reaction is UDP-N-acetyl-alpha-D-muramoyl-L-alanyl-gamma-D-glutamyl-meso-2,6-diaminopimeloyl-D-alanyl-D-alanine + di-trans,octa-cis-undecaprenyl phosphate = di-trans,octa-cis-undecaprenyl diphospho-N-acetyl-alpha-D-muramoyl-L-alanyl-D-glutamyl-meso-2,6-diaminopimeloyl-D-alanyl-D-alanine + UMP. The protein operates within cell wall biogenesis; peptidoglycan biosynthesis. In terms of biological role, catalyzes the initial step of the lipid cycle reactions in the biosynthesis of the cell wall peptidoglycan: transfers peptidoglycan precursor phospho-MurNAc-pentapeptide from UDP-MurNAc-pentapeptide onto the lipid carrier undecaprenyl phosphate, yielding undecaprenyl-pyrophosphoryl-MurNAc-pentapeptide, known as lipid I. This Rickettsia felis (strain ATCC VR-1525 / URRWXCal2) (Rickettsia azadi) protein is Phospho-N-acetylmuramoyl-pentapeptide-transferase.